The chain runs to 300 residues: MVLLLRYRSLTINLTPLIPKSQKFHTLQSFRNPNFISIPKISASTNNPTTTTNRSISDATKFAKSVLFIPPGVEIEELTDDMVLPGSNIVIGPFAGHSQIKEVEFVKSSARARDCPKDDRPEIAILGRSNVGKSSLINCLVRKKEVALTSKKPGKTQLINHFLVNKSWYIVDLPGYGFAKVSDAAKTDWSAFTKGYFLNRDSLVCVLLLIDASVPPQKIDLDCANWLGRNNVPMTFVFTKCDKMKATKGKRPDENIKAFQQIIRENFKVHPPWILTSSVSGLGRDELLLHMSQLRNYWDQ.

An EngB-type G domain is found at 119–297 (DRPEIAILGR…LLHMSQLRNY (179 aa)). GTP contacts are provided by residues 127–134 (GRSNVGKS), 154–158 (GKTQL), 172–175 (DLPG), 239–242 (TKCD), and 276–278 (TSS). Residues Ser-134 and Thr-156 each coordinate Mg(2+).

This sequence belongs to the TRAFAC class TrmE-Era-EngA-EngB-Septin-like GTPase superfamily. EngB GTPase family. Requires Mg(2+) as cofactor.

This Arabidopsis thaliana (Mouse-ear cress) protein is GTP-binding protein At2g22870 (EMB2001).